The sequence spans 159 residues: Crossover junction endodeoxyribonuclease RuvC (159 aa).

Residues Asp7, Glu67, and Asp139 contribute to the active site. Mg(2+) contacts are provided by Asp7, Glu67, and Asp139.

Belongs to the RuvC family. In terms of assembly, homodimer which binds Holliday junction (HJ) DNA. The HJ becomes 2-fold symmetrical on binding to RuvC with unstacked arms; it has a different conformation from HJ DNA in complex with RuvA. In the full resolvosome a probable DNA-RuvA(4)-RuvB(12)-RuvC(2) complex forms which resolves the HJ. Requires Mg(2+) as cofactor.

It localises to the cytoplasm. The enzyme catalyses Endonucleolytic cleavage at a junction such as a reciprocal single-stranded crossover between two homologous DNA duplexes (Holliday junction).. The RuvA-RuvB-RuvC complex processes Holliday junction (HJ) DNA during genetic recombination and DNA repair. Endonuclease that resolves HJ intermediates. Cleaves cruciform DNA by making single-stranded nicks across the HJ at symmetrical positions within the homologous arms, yielding a 5'-phosphate and a 3'-hydroxyl group; requires a central core of homology in the junction. The consensus cleavage sequence is 5'-(A/T)TT(C/G)-3'. Cleavage occurs on the 3'-side of the TT dinucleotide at the point of strand exchange. HJ branch migration catalyzed by RuvA-RuvB allows RuvC to scan DNA until it finds its consensus sequence, where it cleaves and resolves the cruciform DNA. The protein is Crossover junction endodeoxyribonuclease RuvC of Orientia tsutsugamushi (strain Ikeda) (Rickettsia tsutsugamushi).